The sequence spans 305 residues: Beta-carotene 3-hydroxylase, chloroplastic (305 aa).

Residues 1–41 (MAFAMSSSLTLFQYQSFGKKPFFSRRRDFAGCSMMNPLVAR) constitute a chloroplast transit peptide. 2 helical membrane passes run 98-118 (YLVA…AAVY) and 129-149 (AVPL…AVGM). Residues 146 to 272 (AVGMEYWARW…KFNGVPYGLF (127 aa)) form the Fatty acid hydroxylase domain. The Histidine box-1 signature appears at 157-162 (HRALWH). The short motif at 169 to 173 (HESHH) is the Histidine box-2 element. Helical transmembrane passes span 184-204 (DVFA…GFFH) and 207-227 (FFSG…MAYM). A Histidine box-3 motif is present at residues 230–235 (HDGLVH). The Histidine box-4 motif lies at 256–260 (HQIHH).

It belongs to the sterol desaturase family. In terms of assembly, homodimer. As to expression, expressed in flower buds and lips. Detected in roots and leaves.

Its subcellular location is the plastid. The protein localises to the chloroplast membrane. The catalysed reaction is all-trans-beta-carotene + 4 reduced [2Fe-2S]-[ferredoxin] + 2 O2 + 4 H(+) = all-trans-zeaxanthin + 4 oxidized [2Fe-2S]-[ferredoxin] + 2 H2O. Its function is as follows. Nonheme diiron monooxygenase involved in the biosynthesis of xanthophylls. Specific for beta-ring hydroxylations of beta-carotene. Uses ferredoxin as an electron donor. The polypeptide is Beta-carotene 3-hydroxylase, chloroplastic (BHY) (Oncidium hybrid cultivar (Orchid)).